Consider the following 222-residue polypeptide: MLTRLFVTGTDTAVGKTVVSRALLQALSQNGRTAVGYKPVATESKETSEGLRNQDALILQASSSIELNYQEVNPYPLQGDVIHACTDTLINYEKMTEGLQCLSAKADTVIVEGCGGWKVMMNDQRFYSDWVVQEQLPVILVVGIKLGCINHALLTAQAIINDGLPLLGWVANRINPGLAHYAETIAMLRDRLAAPQLGQLPYLPRPEEKPLAKYLDLTAISG.

Threonine 17 is a binding site for Mg(2+). Residue lysine 38 is part of the active site. Threonine 42 serves as a coordination point for substrate. Residues aspartate 55 and glutamate 112 each coordinate Mg(2+). Residues aspartate 55, 112–115, 172–173, 201–203, and glutamate 208 contribute to the ATP site; these read EGCG, NR, and PYL.

The protein belongs to the dethiobiotin synthetase family. In terms of assembly, homodimer. Requires Mg(2+) as cofactor.

It localises to the cytoplasm. It catalyses the reaction (7R,8S)-7,8-diammoniononanoate + CO2 + ATP = (4R,5S)-dethiobiotin + ADP + phosphate + 3 H(+). It participates in cofactor biosynthesis; biotin biosynthesis; biotin from 7,8-diaminononanoate: step 1/2. Catalyzes a mechanistically unusual reaction, the ATP-dependent insertion of CO2 between the N7 and N8 nitrogen atoms of 7,8-diaminopelargonic acid (DAPA, also called 7,8-diammoniononanoate) to form a ureido ring. This is ATP-dependent dethiobiotin synthetase BioD 2 from Yersinia pestis.